The following is a 192-amino-acid chain: Adenylate kinase (192 aa).

10 to 18 (GVPGVGSTT) lines the ATP pocket.

This sequence belongs to the archaeal adenylate kinase family. As to quaternary structure, monomer.

Its subcellular location is the cytoplasm. It carries out the reaction AMP + ATP = 2 ADP. This chain is Adenylate kinase, found in Methanococcus vannielii (strain ATCC 35089 / DSM 1224 / JCM 13029 / OCM 148 / SB).